Consider the following 329-residue polypeptide: Cathepsin K (329 aa).

An N-terminal signal peptide occupies residues 1–15; the sequence is MWGLKVLLLPVMSFA. The propeptide at 16 to 114 is activation peptide; the sequence is LYPEEILDTH…TLYIPDWEGR (99 aa). N-linked (GlcNAc...) asparagine glycosylation occurs at Asn103. Intrachain disulfides connect Cys136–Cys177, Cys170–Cys210, and Cys269–Cys318. The active site involves Cys139. Residues His276 and Asn296 contribute to the active site.

The protein belongs to the peptidase C1 family.

Its subcellular location is the lysosome. The protein resides in the secreted. The protein localises to the apical cell membrane. The catalysed reaction is Broad proteolytic activity. With small-molecule substrates and inhibitors, the major determinant of specificity is P2, which is preferably Leu, Met &gt; Phe, and not Arg.. Functionally, thiol protease involved in osteoclastic bone resorption and may participate partially in the disorder of bone remodeling. Displays potent endoprotease activity against fibrinogen at acid pH. May play an important role in extracellular matrix degradation. Involved in the release of thyroid hormone thyroxine (T4) by limited proteolysis of TG/thyroglobulin in the thyroid follicle lumen. This chain is Cathepsin K (CTSK), found in Macaca fascicularis (Crab-eating macaque).